A 576-amino-acid polypeptide reads, in one-letter code: Arginine--tRNA ligase (576 aa).

The 'HIGH' region motif lies at 126–136 (ANPTGPMHIGH).

This sequence belongs to the class-I aminoacyl-tRNA synthetase family. In terms of assembly, monomer.

The protein resides in the cytoplasm. The enzyme catalyses tRNA(Arg) + L-arginine + ATP = L-arginyl-tRNA(Arg) + AMP + diphosphate. This chain is Arginine--tRNA ligase, found in Rickettsia bellii (strain OSU 85-389).